A 1742-amino-acid chain; its full sequence is NACHT and WD repeat domain-containing protein 2 (1742 aa).

5 LRR repeats span residues 386–410 (FYEY…GHIN), 677–698 (LEDV…TRPS), 724–747 (VKNV…LYLQ), 883–906 (YSQE…VTAF), and 925–953 (LPKL…SSMD). Positions 410 to 737 (NPLIIYGGPC…TLLVWANRHL (328 aa)) constitute an NACHT domain. WD repeat units lie at residues 963-1004 (LSSS…LLRQ), 1007-1046 (TAQS…LLSE), 1140-1179 (FSGG…SPQL), 1229-1271 (KHNE…ASLQ), 1272-1311 (EISG…AMSN), 1314-1353 (KTGK…IEAV), 1355-1394 (KHEG…NLFR), 1396-1434 (NGQR…RVCN), 1476-1516 (EDGT…ICRR), 1522-1564 (NFLK…VHAS), and 1614-1653 (SLYK…DAAL).

The protein is NACHT and WD repeat domain-containing protein 2 (NWD2) of Homo sapiens (Human).